The primary structure comprises 543 residues: Chaperonin GroEL 1 (543 aa).

ATP is bound by residues 30 to 33, Lys51, 87 to 91, Gly415, and Asp496; these read TLGP and DGTTT.

Belongs to the chaperonin (HSP60) family. Forms a cylinder of 14 subunits composed of two heptameric rings stacked back-to-back. Interacts with the co-chaperonin GroES.

The protein localises to the cytoplasm. The catalysed reaction is ATP + H2O + a folded polypeptide = ADP + phosphate + an unfolded polypeptide.. In terms of biological role, together with its co-chaperonin GroES, plays an essential role in assisting protein folding. The GroEL-GroES system forms a nano-cage that allows encapsulation of the non-native substrate proteins and provides a physical environment optimized to promote and accelerate protein folding. This chain is Chaperonin GroEL 1, found in Roseobacter denitrificans (strain ATCC 33942 / OCh 114) (Erythrobacter sp. (strain OCh 114)).